Consider the following 234-residue polypeptide: Uridylate kinase (234 aa).

Residue 9 to 10 participates in ATP binding; sequence GS. Glycine 43 is a binding site for UMP. Residues glycine 44 and arginine 48 each coordinate ATP. UMP contacts are provided by residues aspartate 65 and 113–119; that span reads VIPGQTT. Threonine 139, tyrosine 145, and aspartate 148 together coordinate ATP.

It belongs to the UMP kinase family. Homohexamer.

The protein resides in the cytoplasm. The catalysed reaction is UMP + ATP = UDP + ADP. It functions in the pathway pyrimidine metabolism; CTP biosynthesis via de novo pathway; UDP from UMP (UMPK route): step 1/1. With respect to regulation, inhibited by UTP. In terms of biological role, catalyzes the reversible phosphorylation of UMP to UDP. This chain is Uridylate kinase, found in Methanococcoides burtonii (strain DSM 6242 / NBRC 107633 / OCM 468 / ACE-M).